A 226-amino-acid chain; its full sequence is Regulator of microtubule dynamics protein 1 (226 aa).

The protein belongs to the FAM82/RMD family. In terms of assembly, interacts with air-2.

The protein resides in the cytoplasm. Its subcellular location is the cytoskeleton. It localises to the spindle pole. Functionally, acts in chromosome segregation and organization during mitosis. This is Regulator of microtubule dynamics protein 1 (rmd-1) from Caenorhabditis elegans.